A 79-amino-acid polypeptide reads, in one-letter code: uncharacterized protein (79 aa).

The next 2 helical transmembrane spans lie at 28-48 and 51-71; these read CIILSGFAGLCMAYLYYALLA and VALTEAILGGAILPALFAFTV.

It localises to the cell membrane. This is an uncharacterized protein from Methanocaldococcus jannaschii (strain ATCC 43067 / DSM 2661 / JAL-1 / JCM 10045 / NBRC 100440) (Methanococcus jannaschii).